The sequence spans 213 residues: High frequency lysogenization protein HflD homolog (213 aa).

Residues 79-122 (QGLNAELTRYTLSLMVLERKLSSAKGALNTLGDRINGLQRQLDH) adopt a coiled-coil conformation.

It belongs to the HflD family.

The protein localises to the cytoplasm. It is found in the cell inner membrane. The protein is High frequency lysogenization protein HflD homolog of Salmonella typhi.